Here is a 718-residue protein sequence, read N- to C-terminus: Cyclomaltodextrin glucanotransferase (718 aa).

The N-terminal stretch at 1–34 (MFQMAKRVLLSTTLTFSLLAGSALPFLPASAIYA) is a signal peptide. The A1 stretch occupies residues 35–172 (DADTAVTNKQ…GIKIIIDFAP (138 aa)). Positions 61, 63, 66, and 67 each coordinate Ca(2+). Cys-77 and Cys-84 form a disulfide bridge. 2 residues coordinate Ca(2+): Gly-85 and Asp-87. 134–135 (YW) contacts substrate. Asn-173 is a Ca(2+) binding site. Positions 173–236 (NHTSPAMETD…NLYDLADLNH (64 aa)) are b. His-174 lines the substrate pocket. Ile-224 is a Ca(2+) binding site. 227 to 230 (NLYD) contacts substrate. Asp-233 is a Ca(2+) binding site. The A2 stretch occupies residues 237–440 (NNSTIDTYFK…LRKSNPAIAY (204 aa)). Residue Arg-261 participates in substrate binding. The active-site Nucleophile is Asp-263. Substrate is bound at residue 266–267 (KH). His-267 provides a ligand contact to Ca(2+). Glu-291 serves as the catalytic Proton donor. The substrate site is built by His-361, Asp-405, and Arg-409. Residues 441-528 (GSTQQRWINN…ATAVWQYTAS (88 aa)) are c. The d stretch occupies residues 529-614 (ETTPTIGHVG…SNAYNDFTIL (86 aa)). The IPT/TIG domain maps to 532 to 612 (PTIGHVGPVM…VNSNAYNDFT (81 aa)). The CBM20 domain occupies 613–718 (ILSGDQVSVR…GTATVTINWQ (106 aa)). An e region spans residues 615 to 718 (SGDQVSVRFV…GTATVTINWQ (104 aa)).

This sequence belongs to the glycosyl hydrolase 13 family. As to quaternary structure, monomer. The cofactor is Ca(2+).

The protein resides in the secreted. It catalyses the reaction Cyclizes part of a (1-&gt;4)-alpha-D-glucan chain by formation of a (1-&gt;4)-alpha-D-glucosidic bond.. The chain is Cyclomaltodextrin glucanotransferase (cgtA) from Bacillus licheniformis.